A 412-amino-acid chain; its full sequence is Short-chain specific acyl-CoA dehydrogenase, mitochondrial (412 aa).

Residues 1–24 constitute a mitochondrion transit peptide; the sequence is MAAALLARARGPLRRALGVRDWRR. A Phosphothreonine modification is found at threonine 27. Lysine 51 is modified (N6-acetyllysine; alternate). Lysine 51 carries the N6-succinyllysine; alternate modification. Lysine 72 carries the N6-acetyllysine modification. Position 129 is an N6-acetyllysine; alternate (lysine 129). Lysine 129 bears the N6-succinyllysine; alternate mark. Residues 152 to 161 and 185 to 187 contribute to the FAD site; these read FALSEPGNGS and WIT. Serine 161 contacts substrate. Lysine 208 carries the N6-acetyllysine modification. Lysine 262 is subject to N6-acetyllysine; alternate. Lysine 262 is subject to N6-succinyllysine; alternate. 269–272 lines the substrate pocket; sequence DMGR. The residue at position 292 (lysine 292) is an N6-acetyllysine. Arginine 297 serves as a coordination point for FAD. Lysine 306 carries the post-translational modification N6-acetyllysine; alternate. Lysine 306 is subject to N6-succinyllysine; alternate. Residues glutamine 308 and 365 to 369 each bind FAD; that span reads QILGG. Glutamate 392 (proton acceptor) is an active-site residue. Glycine 393 lines the substrate pocket. An FAD-binding site is contributed by 394–396; the sequence is TSE.

Belongs to the acyl-CoA dehydrogenase family. In terms of assembly, homotetramer. The cofactor is FAD.

It localises to the mitochondrion matrix. It carries out the reaction a short-chain 2,3-saturated fatty acyl-CoA + oxidized [electron-transfer flavoprotein] + H(+) = a short-chain (2E)-enoyl-CoA + reduced [electron-transfer flavoprotein]. It catalyses the reaction butanoyl-CoA + oxidized [electron-transfer flavoprotein] + H(+) = (2E)-butenoyl-CoA + reduced [electron-transfer flavoprotein]. The enzyme catalyses pentanoyl-CoA + oxidized [electron-transfer flavoprotein] + H(+) = (2E)-pentenoyl-CoA + reduced [electron-transfer flavoprotein]. The catalysed reaction is hexanoyl-CoA + oxidized [electron-transfer flavoprotein] + H(+) = (2E)-hexenoyl-CoA + reduced [electron-transfer flavoprotein]. The protein operates within lipid metabolism; mitochondrial fatty acid beta-oxidation. In terms of biological role, short-chain specific acyl-CoA dehydrogenase is one of the acyl-CoA dehydrogenases that catalyze the first step of mitochondrial fatty acid beta-oxidation, an aerobic process breaking down fatty acids into acetyl-CoA and allowing the production of energy from fats. The first step of fatty acid beta-oxidation consists in the removal of one hydrogen from C-2 and C-3 of the straight-chain fatty acyl-CoA thioester, resulting in the formation of trans-2-enoyl-CoA. Among the different mitochondrial acyl-CoA dehydrogenases, short-chain specific acyl-CoA dehydrogenase acts specifically on acyl-CoAs with saturated 4 to 6 carbons long primary chains. This is Short-chain specific acyl-CoA dehydrogenase, mitochondrial (Acads) from Mus musculus (Mouse).